A 355-amino-acid polypeptide reads, in one-letter code: tRNA (guanine-N(1)-)-methyltransferase (355 aa).

Residues glycine 109 and 129–134 contribute to the S-adenosyl-L-methionine site; that span reads IGDYVL.

It belongs to the RNA methyltransferase TrmD family. In terms of assembly, homodimer.

It localises to the cytoplasm. It carries out the reaction guanosine(37) in tRNA + S-adenosyl-L-methionine = N(1)-methylguanosine(37) in tRNA + S-adenosyl-L-homocysteine + H(+). In terms of biological role, specifically methylates guanosine-37 in various tRNAs. This Chlamydia caviae (strain ATCC VR-813 / DSM 19441 / 03DC25 / GPIC) (Chlamydophila caviae) protein is tRNA (guanine-N(1)-)-methyltransferase.